The following is a 438-amino-acid chain: GTPase Der (438 aa).

2 consecutive EngA-type G domains span residues 4 to 168 (PIVA…PEGN) and 177 to 352 (IRIA…GNYC). GTP contacts are provided by residues 10 to 17 (GRPNVGKS), 57 to 61 (DTGGI), 120 to 123 (NKID), 183 to 190 (GRPNVGKS), 230 to 234 (DTAGL), and 295 to 298 (NKWD). The region spanning 353–437 (KRIKTGILND…GIKLEFRERK (85 aa)) is the KH-like domain.

It belongs to the TRAFAC class TrmE-Era-EngA-EngB-Septin-like GTPase superfamily. EngA (Der) GTPase family. As to quaternary structure, associates with the 50S ribosomal subunit.

Its function is as follows. GTPase that plays an essential role in the late steps of ribosome biogenesis. The chain is GTPase Der from Clostridium novyi (strain NT).